Reading from the N-terminus, the 298-residue chain is Aspartate carbamoyltransferase catalytic subunit (298 aa).

Positions 53 and 54 each coordinate carbamoyl phosphate. Position 81 (Lys81) interacts with L-aspartate. Residues Arg103, His132, and Gln135 each contribute to the carbamoyl phosphate site. The L-aspartate site is built by Arg166 and Arg218. Carbamoyl phosphate is bound by residues Gly259 and Pro260.

It belongs to the aspartate/ornithine carbamoyltransferase superfamily. ATCase family. As to quaternary structure, heterododecamer (2C3:3R2) of six catalytic PyrB chains organized as two trimers (C3), and six regulatory PyrI chains organized as three dimers (R2).

It carries out the reaction carbamoyl phosphate + L-aspartate = N-carbamoyl-L-aspartate + phosphate + H(+). It functions in the pathway pyrimidine metabolism; UMP biosynthesis via de novo pathway; (S)-dihydroorotate from bicarbonate: step 2/3. Catalyzes the condensation of carbamoyl phosphate and aspartate to form carbamoyl aspartate and inorganic phosphate, the committed step in the de novo pyrimidine nucleotide biosynthesis pathway. This is Aspartate carbamoyltransferase catalytic subunit from Anaplasma marginale (strain St. Maries).